The sequence spans 509 residues: SH2 domain-containing adapter protein B (509 aa).

Disordered regions lie at residues 1-103 and 144-178; these read MAKW…GSSL and SGAGAAASSSSSSGSPHLYRSSSERRPATPAEVRY. The segment at 1-410 is mediates interaction with LAT, PTK2/FAK1, JAK1 and JAK3; sequence MAKWLNKYFS…PAVPLEKQIW (410 aa). The segment covering 44–61 has biased composition (low complexity); it reads VPQASSAASASCGPATAS. Residues 62–79 show a composition bias toward polar residues; the sequence is CFSASSGSLPDDSGSTSD. Residue Ser102 is modified to Phosphoserine. Residues 144-158 show a composition bias toward low complexity; that stretch reads SGAGAAASSSSSSGS. Lys187 is covalently cross-linked (Glycyl lysine isopeptide (Lys-Gly) (interchain with G-Cter in SUMO2)). The disordered stretch occupies residues 229 to 385; the sequence is AEESGAGKKD…APGGGFKPIK (157 aa). Basic and acidic residues-rich tracts occupy residues 233-242 and 250-262; these read GAGKKDKVTI and FDAKNDLKSKAGK. Ser307 and Ser317 each carry phosphoserine. The span at 307-317 shows a compositional bias: polar residues; that stretch reads SVDSDSESTVS. A compositionally biased stretch (basic and acidic residues) spans 319-334; sequence RLRESKLPQDDDRPAD. Ser388 bears the Phosphoserine mark. The SH2 domain occupies 410-504; the sequence is WYHGAISRGD…AEHLSLLYPV (95 aa).

In terms of assembly, interacts with PTPN11. Interacts with phosphorylated 'Tyr-720' of the ligand-activated receptor PDGFRA via its SH2 domain. Interacts with the ligand-activated receptors PDGFRB, FGFR1, KDR/VEGFR2, IL2RB and IL2RG. Interacts with EPS8 and V-SRC. Interacts with GRB2 and GRAP. Interacts with CD3Z. Interacts with tyrosine-phosphorylated LAT upon T-cell antigen receptor activation. Interacts with PLCG1. Interacts with ZAP70, LCP2/SLP-76, VAV1 and GRAP2. Interacts with JAK1 and JAK3. Interacts with PTK2/FAK1. Interacts with CRK/CrKII. Interacts with IRS2. Post-translationally, phosphorylated upon PDGFRA, PDGFRB, TCR, IL2 receptor, FGFR1 or VEGFR2 activation. As to expression, widely expressed.

The protein localises to the cytoplasm. The protein resides in the cell membrane. Adapter protein which regulates several signal transduction cascades by linking activated receptors to downstream signaling components. May play a role in angiogenesis by regulating FGFR1, VEGFR2 and PDGFR signaling. May also play a role in T-cell antigen receptor/TCR signaling, interleukin-2 signaling, apoptosis and neuronal cells differentiation by mediating basic-FGF and NGF-induced signaling cascades. May also regulate IRS1 and IRS2 signaling in insulin-producing cells. The chain is SH2 domain-containing adapter protein B (SHB) from Homo sapiens (Human).